Consider the following 290-residue polypeptide: Protease HtpX homolog (290 aa).

The next 2 helical transmembrane spans lie at 4–24 and 39–59; these read ILLF…VASL and TALL…SLLI. Residue H144 coordinates Zn(2+). E145 is a catalytic residue. H148 contributes to the Zn(2+) binding site. Transmembrane regions (helical) follow at residues 159-179 and 199-219; these read LIQG…GYAV and VSTI…VAWF. E224 is a Zn(2+) binding site.

The protein belongs to the peptidase M48B family. Zn(2+) is required as a cofactor.

It is found in the cell inner membrane. The chain is Protease HtpX homolog from Variovorax paradoxus (strain S110).